Reading from the N-terminus, the 123-residue chain is Small ribosomal subunit protein uS12 (123 aa).

The interval 1–26 (MPTLNQLVRKPRKRPVAKSKVPALDA) is disordered. Residue Asp-89 is modified to 3-methylthioaspartic acid. The interval 104–123 (TAGVKNRKQSRSKYGAKRPK) is disordered. Positions 108–123 (KNRKQSRSKYGAKRPK) are enriched in basic residues.

Belongs to the universal ribosomal protein uS12 family. As to quaternary structure, part of the 30S ribosomal subunit. Contacts proteins S8 and S17. May interact with IF1 in the 30S initiation complex.

Functionally, with S4 and S5 plays an important role in translational accuracy. Its function is as follows. Interacts with and stabilizes bases of the 16S rRNA that are involved in tRNA selection in the A site and with the mRNA backbone. Located at the interface of the 30S and 50S subunits, it traverses the body of the 30S subunit contacting proteins on the other side and probably holding the rRNA structure together. The combined cluster of proteins S8, S12 and S17 appears to hold together the shoulder and platform of the 30S subunit. The polypeptide is Small ribosomal subunit protein uS12 (Acidithiobacillus ferrooxidans (strain ATCC 23270 / DSM 14882 / CIP 104768 / NCIMB 8455) (Ferrobacillus ferrooxidans (strain ATCC 23270))).